The following is a 345-amino-acid chain: Membrane progestin receptor gamma-A (345 aa).

Residues 1–52 are Cytoplasmic-facing; sequence MLNLIKLPQVFTINQVPKVFHEDGIISGYRHPCSSAKDCVLSLFQLTNETLN. The chain crosses the membrane as a helical span at residues 53–73; sequence IWTHFLPTWFFLWKLLTVVLV. Residues 74–80 are Extracellular-facing; that stretch reads LEDWRDP. The helical transmembrane segment at 81–101 threads the bilayer; sequence FIWPFLVFLLSCCVYPLASSC. Topologically, residues 102–114 are cytoplasmic; the sequence is AHTFSTMSERARH. The chain crosses the membrane as a helical span at residues 115 to 135; it reads ICFFFDYGALSFYSLGSAIIY. The Extracellular portion of the chain corresponds to 136 to 148; the sequence is SSYSFPDKWVNGT. Residues 149–169 form a helical membrane-spanning segment; the sequence is FHLNYVSIAVVNSIISTALAC. Topologically, residues 170 to 201 are cytoplasmic; sequence YSRLGLPFLEYNCHSIKRPSGKLDQKLCKCLR. The helical transmembrane segment at 202 to 222 threads the bilayer; that stretch reads IIAFVYPYLFDNIPLFYRIFV. Residues 223–272 lie on the Extracellular side of the membrane; sequence CAGEGCTVNEANTVHYQHTSLAFFTGFLFATHLPERLAPGSFDYIGHSHQ. Residues 273 to 293 traverse the membrane as a helical segment; that stretch reads LFHVFAIIGTYFQMTAIELDM. Residues 294–314 lie on the Cytoplasmic side of the membrane; the sequence is AARKQWLHAHLPPVTFLNTVG. Residues 315 to 335 form a helical membrane-spanning segment; the sequence is AAFFSVVSGLCIVYVFSLSLF. Over 336 to 345 the chain is Extracellular; the sequence is STRGVKNKSF.

Belongs to the ADIPOR family.

It is found in the membrane. Functionally, steroid membrane receptor. Binds progesterone. May be involved in oocyte maturation. The protein is Membrane progestin receptor gamma-A (paqr5a) of Danio rerio (Zebrafish).